We begin with the raw amino-acid sequence, 132 residues long: tRNA (cytidine(56)-2'-O)-methyltransferase (132 aa).

S-adenosyl-L-methionine is bound by residues Leu35, Gly65–Val69, and Ile83–Glu90.

The protein belongs to the aTrm56 family. As to quaternary structure, homodimer.

The protein localises to the cytoplasm. The catalysed reaction is cytidine(56) in tRNA + S-adenosyl-L-methionine = 2'-O-methylcytidine(56) in tRNA + S-adenosyl-L-homocysteine + H(+). Functionally, specifically catalyzes the AdoMet-dependent 2'-O-ribose methylation of cytidine at position 56 in tRNAs. The sequence is that of tRNA (cytidine(56)-2'-O)-methyltransferase from Sulfolobus acidocaldarius (strain ATCC 33909 / DSM 639 / JCM 8929 / NBRC 15157 / NCIMB 11770).